Consider the following 472-residue polypeptide: Poly(A) polymerase catalytic subunit (472 aa).

Catalysis depends on residues Asp-194 and Asp-196.

It belongs to the poxviridae poly(A) polymerase catalytic subunit family. In terms of assembly, heterodimer of a large (catalytic) subunit and a small (regulatory) subunit.

It catalyses the reaction RNA(n) + ATP = RNA(n)-3'-adenine ribonucleotide + diphosphate. Polymerase that creates the 3'-poly(A) tail of mRNA's. The polypeptide is Poly(A) polymerase catalytic subunit (PAPL) (Fowlpox virus (strain NVSL) (FPV)).